Reading from the N-terminus, the 1048-residue chain is uncharacterized protein (1048 aa).

Residues 601–629 (ENQINEEQQTNVENEQQTEQQFENEDKET) are disordered. Residues 605-621 (NEEQQTNVENEQQTEQQ) are compositionally biased toward low complexity.

This is an uncharacterized protein from Methanocaldococcus jannaschii (strain ATCC 43067 / DSM 2661 / JAL-1 / JCM 10045 / NBRC 100440) (Methanococcus jannaschii).